We begin with the raw amino-acid sequence, 202 residues long: Small ribosomal subunit protein bS20c (202 aa).

The transit peptide at 1–79 (MATIVQCLSS…KPMRQLIVCE (79 aa)) directs the protein to the chloroplast. The disordered stretch occupies residues 89 to 110 (SAAKRARQAEKRRVYNKSKKSE).

Belongs to the bacterial ribosomal protein bS20 family. As to quaternary structure, part of the 30S ribosomal subunit.

It is found in the plastid. The protein localises to the chloroplast. Its function is as follows. Binds directly to 16S ribosomal RNA. The chain is Small ribosomal subunit protein bS20c (RPS20) from Arabidopsis thaliana (Mouse-ear cress).